The primary structure comprises 71 residues: Small integral membrane protein 31 (71 aa).

A helical transmembrane segment spans residues 8 to 28 (LEVAFILLAFFIFSLFTLASI). Residues 48 to 57 (RKRKEFKGKK) show a composition bias toward basic residues. The tract at residues 48-71 (RKRKEFKGKKNCSDEEHKIETMQP) is disordered. A glycan (N-linked (GlcNAc...) asparagine) is linked at asparagine 58. Residues 58–71 (NCSDEEHKIETMQP) are compositionally biased toward basic and acidic residues.

It is found in the membrane. The sequence is that of Small integral membrane protein 31 from Mus musculus (Mouse).